A 315-amino-acid chain; its full sequence is tRNA pseudouridine synthase B (315 aa).

Asp-47 (nucleophile) is an active-site residue.

This sequence belongs to the pseudouridine synthase TruB family. Type 1 subfamily.

It catalyses the reaction uridine(55) in tRNA = pseudouridine(55) in tRNA. Responsible for synthesis of pseudouridine from uracil-55 in the psi GC loop of transfer RNAs. The protein is tRNA pseudouridine synthase B of Shewanella amazonensis (strain ATCC BAA-1098 / SB2B).